Here is an 81-residue protein sequence, read N- to C-terminus: WAP four-disulfide core domain protein 13 (81 aa).

The signal sequence occupies residues 1-22 (MRPVSPLQLLLVLSLAPQPVLG). A WAP domain is found at 31-74 (YILEPPPCRSEPGACNMFCTQQEECPEPLQCCSAYCGIVCTSNQ). 4 cysteine pairs are disulfide-bonded: Cys38/Cys62, Cys45/Cys66, Cys49/Cys61, and Cys55/Cys70.

The protein resides in the secreted. Functionally, putative acid-stable proteinase inhibitor. The sequence is that of WAP four-disulfide core domain protein 13 (Wfdc13) from Mus musculus (Mouse).